A 370-amino-acid polypeptide reads, in one-letter code: Pantothenate kinase 3 (370 aa).

Glu138 functions as the Proton acceptor in the catalytic mechanism. Residues Ser192, Ser195, and Arg207 each coordinate acetyl-CoA.

It belongs to the type II pantothenate kinase family. As to quaternary structure, homodimer. As to expression, highly expressed in the liver.

It is found in the cytoplasm. The catalysed reaction is (R)-pantothenate + ATP = (R)-4'-phosphopantothenate + ADP + H(+). It functions in the pathway cofactor biosynthesis; coenzyme A biosynthesis; CoA from (R)-pantothenate: step 1/5. Its activity is regulated as follows. Subject to allosteric regulation, exists in two distinct conformational states, a catalytically incompetent (or open) conformation stabilized by the binding of acetyl(acyl)-CoA, and a catalytically competent (or closed) conformation stabilized by ATP-binding. Acetyl-CoA and its thioesters act as allosteric inhibitors and compete with the ATP-binding site. Strongly inhibited by acetyl-CoA, malonyl-CoA and palmitoyl CoA and modestly inhibited by CoA. Inhibited by calcium hopantenate. In terms of biological role, catalyzes the phosphorylation of pantothenate to generate 4'-phosphopantothenate in the first and rate-determining step of coenzyme A (CoA) synthesis. This is Pantothenate kinase 3 (Pank3) from Mus musculus (Mouse).